A 211-amino-acid polypeptide reads, in one-letter code: Peptidyl-tRNA hydrolase (211 aa).

Tyr-17 contributes to the tRNA binding site. His-22 serves as the catalytic Proton acceptor. TRNA contacts are provided by Phe-79, Asn-81, and Asn-127.

The protein belongs to the PTH family. In terms of assembly, monomer.

Its subcellular location is the cytoplasm. The catalysed reaction is an N-acyl-L-alpha-aminoacyl-tRNA + H2O = an N-acyl-L-amino acid + a tRNA + H(+). In terms of biological role, hydrolyzes ribosome-free peptidyl-tRNAs (with 1 or more amino acids incorporated), which drop off the ribosome during protein synthesis, or as a result of ribosome stalling. Catalyzes the release of premature peptidyl moieties from peptidyl-tRNA molecules trapped in stalled 50S ribosomal subunits, and thus maintains levels of free tRNAs and 50S ribosomes. In Solidesulfovibrio magneticus (strain ATCC 700980 / DSM 13731 / RS-1) (Desulfovibrio magneticus), this protein is Peptidyl-tRNA hydrolase.